The primary structure comprises 356 residues: Tyrosine recombinase XerS (356 aa).

One can recognise a Core-binding (CB) domain in the interval 16–121; it reads LMPWFVLEYY…ALSSLYKYLT (106 aa). Residues 169–354 form the Tyr recombinase domain; the sequence is KFLDYVENEY…VNDEQKNALD (186 aa). Active-site residues include Arg-210, Lys-234, His-306, Arg-309, and His-332. The active-site O-(3'-phospho-DNA)-tyrosine intermediate is the Tyr-341.

Belongs to the 'phage' integrase family. XerS subfamily.

It is found in the cytoplasm. Its activity is regulated as follows. FtsK is required for recombination. Functionally, site-specific tyrosine recombinase, which acts by catalyzing the cutting and rejoining of the recombining DNA molecules. Essential to convert dimers of the bacterial chromosome into monomers to permit their segregation at cell division. This Streptococcus thermophilus (strain ATCC BAA-491 / LMD-9) protein is Tyrosine recombinase XerS.